The chain runs to 328 residues: Lipoyl synthase (328 aa).

[4Fe-4S] cluster contacts are provided by Cys57, Cys62, Cys68, Cys83, Cys87, Cys90, and Ser298. The 219-residue stretch at 69-287 (WSRGTATFML…REEGLSLGFL (219 aa)) folds into the Radical SAM core domain.

Belongs to the radical SAM superfamily. Lipoyl synthase family. [4Fe-4S] cluster serves as cofactor.

It is found in the cytoplasm. It carries out the reaction [[Fe-S] cluster scaffold protein carrying a second [4Fe-4S](2+) cluster] + N(6)-octanoyl-L-lysyl-[protein] + 2 oxidized [2Fe-2S]-[ferredoxin] + 2 S-adenosyl-L-methionine + 4 H(+) = [[Fe-S] cluster scaffold protein] + N(6)-[(R)-dihydrolipoyl]-L-lysyl-[protein] + 4 Fe(3+) + 2 hydrogen sulfide + 2 5'-deoxyadenosine + 2 L-methionine + 2 reduced [2Fe-2S]-[ferredoxin]. Its pathway is protein modification; protein lipoylation via endogenous pathway; protein N(6)-(lipoyl)lysine from octanoyl-[acyl-carrier-protein]: step 2/2. Functionally, catalyzes the radical-mediated insertion of two sulfur atoms into the C-6 and C-8 positions of the octanoyl moiety bound to the lipoyl domains of lipoate-dependent enzymes, thereby converting the octanoylated domains into lipoylated derivatives. The protein is Lipoyl synthase of Deinococcus geothermalis (strain DSM 11300 / CIP 105573 / AG-3a).